The chain runs to 387 residues: GTP-binding protein 10 (387 aa).

In terms of domain architecture, Obg spans 13–148 (GNFIDNLRLF…RVIHLDLKLI (136 aa)). Residues 149–344 (ADIGLVGFPN…LKNCIRKSLD (196 aa)) form the OBG-type G domain. Residues 155 to 162 (GFPNAGKS), 202 to 206 (DLPGL), and 278 to 281 (NKMD) each bind GTP.

This sequence belongs to the TRAFAC class OBG-HflX-like GTPase superfamily. OBG GTPase family.

The protein resides in the nucleus. The protein localises to the nucleolus. Its function is as follows. May be involved in the ribosome maturation process. The chain is GTP-binding protein 10 (GTPBP10) from Bos taurus (Bovine).